We begin with the raw amino-acid sequence, 207 residues long: Putative 3-methyladenine DNA glycosylase (207 aa).

Residues 182–193 (PAPAGARAARAP) show a composition bias toward low complexity. Positions 182 to 207 (PAPAGARAARAPAPAPRPRRPRGSGP) are disordered. Over residues 198 to 207 (RPRRPRGSGP) the composition is skewed to basic residues.

It belongs to the DNA glycosylase MPG family.

In Anaeromyxobacter dehalogenans (strain 2CP-C), this protein is Putative 3-methyladenine DNA glycosylase.